Here is a 98-residue protein sequence, read N- to C-terminus: NADH-ubiquinone oxidoreductase chain 4L (98 aa).

Helical transmembrane passes span Met-1–Leu-21, Ser-29–Leu-49, and Ile-61–Val-81.

This sequence belongs to the complex I subunit 4L family. Core subunit of respiratory chain NADH dehydrogenase (Complex I) which is composed of 45 different subunits.

The protein localises to the mitochondrion inner membrane. It catalyses the reaction a ubiquinone + NADH + 5 H(+)(in) = a ubiquinol + NAD(+) + 4 H(+)(out). Core subunit of the mitochondrial membrane respiratory chain NADH dehydrogenase (Complex I) which catalyzes electron transfer from NADH through the respiratory chain, using ubiquinone as an electron acceptor. Part of the enzyme membrane arm which is embedded in the lipid bilayer and involved in proton translocation. The polypeptide is NADH-ubiquinone oxidoreductase chain 4L (MT-ND4L) (Choloepus didactylus (Southern two-toed sloth)).